Here is a 322-residue protein sequence, read N- to C-terminus: Pantothenate kinase (322 aa).

104–111 (GSVAVGKS) provides a ligand contact to ATP.

Belongs to the prokaryotic pantothenate kinase family.

Its subcellular location is the cytoplasm. It catalyses the reaction (R)-pantothenate + ATP = (R)-4'-phosphopantothenate + ADP + H(+). Its pathway is cofactor biosynthesis; coenzyme A biosynthesis; CoA from (R)-pantothenate: step 1/5. The protein is Pantothenate kinase of Leifsonia xyli subsp. xyli (strain CTCB07).